The sequence spans 192 residues: Peptidyl-prolyl cis-trans isomerase 1 (192 aa).

The 164-residue stretch at 25 to 188 folds into the PPIase cyclophilin-type domain; sequence FFDVSIGEEP…KTVTIADCGE (164 aa).

This sequence belongs to the cyclophilin-type PPIase family.

It carries out the reaction [protein]-peptidylproline (omega=180) = [protein]-peptidylproline (omega=0). In terms of biological role, PPIases accelerate the folding of proteins. It catalyzes the cis-trans isomerization of proline imidic peptide bonds in oligopeptides. In Caenorhabditis elegans, this protein is Peptidyl-prolyl cis-trans isomerase 1 (cyn-1).